A 208-amino-acid polypeptide reads, in one-letter code: 3-isopropylmalate dehydratase small subunit (208 aa).

The protein belongs to the LeuD family. LeuD type 1 subfamily. As to quaternary structure, heterodimer of LeuC and LeuD.

The catalysed reaction is (2R,3S)-3-isopropylmalate = (2S)-2-isopropylmalate. The protein operates within amino-acid biosynthesis; L-leucine biosynthesis; L-leucine from 3-methyl-2-oxobutanoate: step 2/4. In terms of biological role, catalyzes the isomerization between 2-isopropylmalate and 3-isopropylmalate, via the formation of 2-isopropylmaleate. The polypeptide is 3-isopropylmalate dehydratase small subunit (Granulibacter bethesdensis (strain ATCC BAA-1260 / CGDNIH1)).